The primary structure comprises 184 residues: ATP synthase subunit delta (184 aa).

This sequence belongs to the ATPase delta chain family. As to quaternary structure, F-type ATPases have 2 components, F(1) - the catalytic core - and F(0) - the membrane proton channel. F(1) has five subunits: alpha(3), beta(3), gamma(1), delta(1), epsilon(1). F(0) has three main subunits: a(1), b(2) and c(10-14). The alpha and beta chains form an alternating ring which encloses part of the gamma chain. F(1) is attached to F(0) by a central stalk formed by the gamma and epsilon chains, while a peripheral stalk is formed by the delta and b chains.

The protein localises to the cell inner membrane. Its function is as follows. F(1)F(0) ATP synthase produces ATP from ADP in the presence of a proton or sodium gradient. F-type ATPases consist of two structural domains, F(1) containing the extramembraneous catalytic core and F(0) containing the membrane proton channel, linked together by a central stalk and a peripheral stalk. During catalysis, ATP synthesis in the catalytic domain of F(1) is coupled via a rotary mechanism of the central stalk subunits to proton translocation. This protein is part of the stalk that links CF(0) to CF(1). It either transmits conformational changes from CF(0) to CF(1) or is implicated in proton conduction. This Zymomonas mobilis subsp. mobilis (strain ATCC 31821 / ZM4 / CP4) protein is ATP synthase subunit delta.